Reading from the N-terminus, the 352-residue chain is C5a anaphylatoxin chemotactic receptor 1 (352 aa).

Residues 1 to 11 show a composition bias toward polar residues; the sequence is MDPISNDSSEI. The segment at 1–20 is disordered; the sequence is MDPISNDSSEITYDYSDGTP. The Extracellular portion of the chain corresponds to 1–38; sequence MDPISNDSSEITYDYSDGTPNPDMPADGVYIPKMEPGD. N-linked (GlcNAc...) asparagine glycosylation is present at Asn6. Residues Tyr13 and Tyr15 each carry the sulfotyrosine modification. The helical transmembrane segment at 39 to 65 threads the bilayer; sequence IAALIIYLAVFLVGVTGNALVVWVTAF. Topologically, residues 66–70 are cytoplasmic; the sequence is EAKRT. Residues 71-94 form a helical membrane-spanning segment; sequence VNAIWFLNLAVADLLSCLALPILF. Over 95–111 the chain is Extracellular; that stretch reads TSIVKHNHWPFGDQACI. Cys110 and Cys189 are disulfide-bonded. Residues 112-133 traverse the membrane as a helical segment; that stretch reads VLPSLILLNMYSSILLLATISA. The Cytoplasmic portion of the chain corresponds to 134–154; the sequence is DRFLLVFKPIWCQKFRRPGLA. Residues 155-175 traverse the membrane as a helical segment; sequence WMACGVTWVLALLLTIPSFVF. At 176-202 the chain is on the extracellular side; it reads RRIHKDPYSDSILCNIDYSKGPFFIEK. The helical transmembrane segment at 203–228 threads the bilayer; sequence AIAILRLMVGFVLPLLTLNICYTFLL. At 229-244 the chain is on the cytoplasmic side; it reads IRTWSRKATRSTKTLK. The helical transmembrane segment at 245–267 threads the bilayer; sequence VVMAVVTCFFVFWLPYQVTGVIL. The Extracellular segment spans residues 268 to 284; sequence AWLPRSSSTFQSVERLN. Residues 285 to 305 form a helical membrane-spanning segment; the sequence is SLCVSLAYINCCVNPIIYVMA. The Cytoplasmic portion of the chain corresponds to 306–352; the sequence is GQGFHGRLRRSLPSIIRNVLSEDSLGRDSKSFTRSTMDTSTQKSQAV. A phosphoserine mark is found at Ser316, Ser319, Ser326, Ser329, Ser334, Ser336, and Ser340. Residues 332–352 form a disordered region; it reads RDSKSFTRSTMDTSTQKSQAV. Over residues 337–352 the composition is skewed to polar residues; the sequence is FTRSTMDTSTQKSQAV.

This sequence belongs to the G-protein coupled receptor 1 family. In terms of assembly, homodimer. May also form higher-order oligomers. Interacts (when phosphorylated) with ARRB1 and ARRB2; the interaction is associated with internalization of C5aR. Post-translationally, sulfation plays a critical role in the association of C5aR with C5a, but no significant role in the ability of the receptor to transduce a signal and mobilize calcium in response to a small peptide agonist. In terms of processing, phosphorylated on serine residues in response to C5a binding, resulting in internalization of the receptor and short-term desensitization to the ligand.

The protein localises to the cell membrane. It localises to the cytoplasmic vesicle. Functionally, receptor for the chemotactic and inflammatory peptide anaphylatoxin C5a. The ligand interacts with at least two sites on the receptor: a high-affinity site on the extracellular N-terminus, and a second site in the transmembrane region which activates downstream signaling events. Receptor activation stimulates chemotaxis, granule enzyme release, intracellular calcium release and superoxide anion production. This Rattus norvegicus (Rat) protein is C5a anaphylatoxin chemotactic receptor 1 (C5ar1).